Here is a 217-residue protein sequence, read N- to C-terminus: PRA1 family protein B3 (217 aa).

Residues 1–24 form a disordered region; sequence MMANPPTLPISDHSGGGSQSQQPV. 5 helical membrane-spanning segments follow: residues 76–96, 98–118, 138–158, 162–182, and 193–213; these read LPYF…LSLL, HPFS…LYLF, LGVL…GSLL, LMIG…EDLF, and LLSF…STPA.

The protein belongs to the PRA1 family. In terms of assembly, interacts with PRA1B1, PRA1B2, PRA1B4, PRA1B5, PRA1B6 and PRA1E. As to expression, expressed in hypocotyls and shoot apex.

Its subcellular location is the endosome membrane. Its function is as follows. May be involved in both secretory and endocytic intracellular trafficking in the endosomal/prevacuolar compartments. This chain is PRA1 family protein B3 (PRA1B3), found in Arabidopsis thaliana (Mouse-ear cress).